A 1520-amino-acid polypeptide reads, in one-letter code: Putative lipoprotein AcfD homolog (1520 aa).

The N-terminal stretch at 1–23 (MNKKFKYKKSLLAAILSATLLAG) is a signal peptide. Disordered stretches follow at residues 22-107 (AGCD…GATC) and 226-247 (NAAT…TTPG). C24 carries N-palmitoyl cysteine lipidation. The S-diacylglycerol cysteine moiety is linked to residue C24. Over residues 31–42 (SSSDTPPVDSGT) the composition is skewed to low complexity. Over residues 51-77 (DPTPNPEPTPEPTPDPEPTPEPIPDPE) the composition is skewed to pro residues. The span at 97–107 (GGSQRVTGATC) shows a compositional bias: polar residues. Over residues 234 to 247 (STHTSPVVPVTTPG) the composition is skewed to low complexity. The region spanning 1081-1381 (GNMQSTGLWA…MYAQLKEWAE (301 aa)) is the Peptidase M60 domain. The disordered stretch occupies residues 1498–1520 (DLPKPEQGPETINQVTEHKMSAE).

To V.cholerae AcfD (VC_0845).

Its subcellular location is the cell inner membrane. Involved in a type II secretion system (T2SS, formerly general secretion pathway, GSP) for the export of folded proteins across the outer membrane. The protein is Putative lipoprotein AcfD homolog (yghJ) of Escherichia coli (strain K12).